Reading from the N-terminus, the 237-residue chain is Ribose-5-phosphate isomerase A (237 aa).

Substrate-binding positions include 33 to 36, 90 to 93, and 103 to 106; these read TGST, DGAD, and KGGG. The active-site Proton acceptor is the Glu112. Lys130 serves as a coordination point for substrate.

Belongs to the ribose 5-phosphate isomerase family. As to quaternary structure, homodimer.

It carries out the reaction aldehydo-D-ribose 5-phosphate = D-ribulose 5-phosphate. It participates in carbohydrate degradation; pentose phosphate pathway; D-ribose 5-phosphate from D-ribulose 5-phosphate (non-oxidative stage): step 1/1. Its function is as follows. Catalyzes the reversible conversion of ribose-5-phosphate to ribulose 5-phosphate. The sequence is that of Ribose-5-phosphate isomerase A from Gloeothece citriformis (strain PCC 7424) (Cyanothece sp. (strain PCC 7424)).